Consider the following 129-residue polypeptide: MVEGDFVDEQSNIALLSSKSMCGDHHSVKNSIGDEIFKLLTKILNSDEKASGDVHTLVSGTPDLSNFNLDNEPLENILAVFIISFIIVVVGVLLLGLIGMIFISLRSGSSNDKKLQSNDEEKQALAEKA.

A helical transmembrane segment spans residues 77–97 (ILAVFIISFIIVVVGVLLLGL). The disordered stretch occupies residues 109 to 129 (SSNDKKLQSNDEEKQALAEKA). Residues 111-129 (NDKKLQSNDEEKQALAEKA) are compositionally biased toward basic and acidic residues.

The protein localises to the vacuole membrane. This is an uncharacterized protein from Saccharomyces cerevisiae (strain ATCC 204508 / S288c) (Baker's yeast).